The following is a 411-amino-acid chain: Secretion apparatus protein BsaZ (411 aa).

The next 4 membrane-spanning stretches (helical) occupy residues 28–48 (IVALIVIATGALAAPALVDLT), 80–100 (IAAPFVLLCAAAGALPSLVQS), 137–157 (ALLYVGVFALTVRVFAGLYHA), and 175–195 (IVLTVRLVLLFLLCALPVLIL). The segment at 341–411 (AANRGGPPPE…APARTGDQNA (71 aa)) is disordered. The span at 370 to 404 (DACADNAFPDDAPPGAAAPNAGSPDGPAPDGGAPA) shows a compositional bias: low complexity.

It belongs to the type III secretion exporter family.

The protein localises to the cell membrane. In terms of biological role, part of the bsa type III secretion system, is involved in the intracellular replication of invading bacteria inside the host cell. Probably necessary for the lysis of the vacuole membrane and escape into the host cell cytoplasm. This Burkholderia pseudomallei (strain 1710b) protein is Secretion apparatus protein BsaZ (bsaZ).